The primary structure comprises 443 residues: MATYQEYKSRSNGNAYDIDGSFGAQCWDGYADYCKYLGLPYANCTNTGYARDIWEQRHENGILNYFDEVEVMQAGDVAIFMVVDGVTPYSHVAIFDSDAGGGYGWFLGQNQGGANGAYNLVKIPYSATYPTAFRPKSFKNAVTVTDNTGLNKGDYFIDVSAYQQADLTTTCQQAGTTKTIIKVSESIAWLSDRHQQQANTSDPIGYYHFGRFGGDSALAQREADLFLSNLPSKKVSYLVIDYEDSASADKQANTNAVIAFMDKIASAGYKPIYYSYKPFTLNNIDYQKIIAKYPNSIWIAGYPDYEVRTEPLWEFFPSMDGVRWWQFTSVGVAGGLDKNIVLLADDSSKMDIPKVDKPQELTFYQKLATNTKLDNSNVPYYEATLSTDYYVESKPNASSADKEFIKAGTRVRVYEKVNGWSRINHPESAQWVEDNYLVNATDM.

A Peptidase C51 domain is found at 1 to 131 (MATYQEYKSR…KIPYSATYPT (131 aa)). Cys-26 acts as the Nucleophile in catalysis. His-91 functions as the Increases nucleophilicity of active site cys; for D-alanyl-L-alanine endopeptidase activity in the catalytic mechanism. The segment at 145–344 (TDNTGLNKGD…GLDKNIVLLA (200 aa)) is acm domain. Residues 380–441 (YYEATLSTDY…VEDNYLVNAT (62 aa)) enclose the SH3b domain.

Belongs to the glycosyl hydrolase 25 family.

The catalysed reaction is Hydrolysis of (1-&gt;4)-beta-linkages between N-acetylmuramic acid and N-acetyl-D-glucosamine residues in a peptidoglycan and between N-acetyl-D-glucosamine residues in chitodextrins.. Ca++ enhances the activity of the enzyme. The endopeptidase activity cleaves the bacterial peptidoglycan between D-alanine and L-alanine. The N-acetyl-muramidase activity cleaves between N-acetylmuramic acid and N-acetylglucosamine bonds. The protein is D-alanyl-L-alanine endopeptidase of Streptococcus agalactiae (Streptococcus agalactiae bacteriophage B30).